The sequence spans 306 residues: Putative HTH-type transcriptional regulatory protein Mhun_2548 (306 aa).

The region spanning 132–189 is the HTH cro/C1-type domain; it reads LRELRETRSLSLGDLGQILGVSRRTVAKYEAGMGTTIEIALRIEETFDSGVIEPIDLI. The H-T-H motif DNA-binding region spans 143 to 162; it reads LGDLGQILGVSRRTVAKYEA.

The chain is Putative HTH-type transcriptional regulatory protein Mhun_2548 from Methanospirillum hungatei JF-1 (strain ATCC 27890 / DSM 864 / NBRC 100397 / JF-1).